A 2375-amino-acid polypeptide reads, in one-letter code: Talin-2 (2375 aa).

Residues 88 to 406 (RPQKIRMLDG…GYIDIILKKK (319 aa)) enclose the FERM domain. The interaction with PIP5K1C stretch occupies residues 312–406 (GVSFFLVKEK…GYIDIILKKK (95 aa)). Phosphoserine occurs at positions 428, 450, 624, and 1024. Phosphotyrosine is present on Tyr-1666. An I/LWEQ domain is found at 2205–2375 (TEWVDPEDPT…KRLQAAGNAV (171 aa)).

In terms of assembly, interacts directly with PIP5K1C.

Its subcellular location is the cytoplasm. The protein resides in the cell junction. It is found in the focal adhesion. It localises to the synapse. The protein localises to the cell membrane. Its subcellular location is the cytoskeleton. Its function is as follows. As a major component of focal adhesion plaques that links integrin to the actin cytoskeleton, may play an important role in cell adhesion. Recruits PIP5K1C to focal adhesion plaques and strongly activates its kinase activity. This is Talin-2 (Tln2) from Mus musculus (Mouse).